The chain runs to 302 residues: N-acetylmuramic acid 6-phosphate etherase (302 aa).

Residues 58–221 (IGESFLNGGR…STGAMVKTGK (164 aa)) enclose the SIS domain. Glutamate 86 functions as the Proton donor in the catalytic mechanism. The active site involves glutamate 117.

It belongs to the GCKR-like family. MurNAc-6-P etherase subfamily. Homodimer.

It carries out the reaction N-acetyl-D-muramate 6-phosphate + H2O = N-acetyl-D-glucosamine 6-phosphate + (R)-lactate. Its pathway is amino-sugar metabolism; N-acetylmuramate degradation. Specifically catalyzes the cleavage of the D-lactyl ether substituent of MurNAc 6-phosphate, producing GlcNAc 6-phosphate and D-lactate. This chain is N-acetylmuramic acid 6-phosphate etherase, found in Clostridium botulinum (strain Okra / Type B1).